We begin with the raw amino-acid sequence, 121 residues long: Fluoride-specific ion channel FluC 2 (121 aa).

4 helical membrane passes run 3-23 (YLFV…LSTL), 27-47 (SGLP…MGYL), 64-84 (GVTT…FELV), and 92-112 (IALL…FCWF). 2 residues coordinate Na(+): G71 and T74.

This sequence belongs to the fluoride channel Fluc/FEX (TC 1.A.43) family.

The protein localises to the cell membrane. It catalyses the reaction fluoride(in) = fluoride(out). With respect to regulation, na(+) is not transported, but it plays an essential structural role and its presence is essential for fluoride channel function. In terms of biological role, fluoride-specific ion channel. Important for reducing fluoride concentration in the cell, thus reducing its toxicity. This is Fluoride-specific ion channel FluC 2 from Staphylococcus haemolyticus (strain JCSC1435).